A 185-amino-acid chain; its full sequence is Sulfopyruvate decarboxylase subunit beta (185 aa).

Belongs to the TPP enzyme family. As to quaternary structure, heterododecamer composed of 6 subunits alpha and 6 subunits beta. It depends on thiamine diphosphate as a cofactor.

It carries out the reaction 3-sulfopyruvate + H(+) = sulfoacetaldehyde + CO2. The protein operates within cofactor biosynthesis; coenzyme M biosynthesis; sulfoacetaldehyde from phosphoenolpyruvate and sulfite: step 4/4. Functionally, involved in the biosynthesis of the coenzyme M (2-mercaptoethanesulfonic acid). Catalyzes the decarboxylation of sulfopyruvate to sulfoacetaldehyde. This is Sulfopyruvate decarboxylase subunit beta from Methanothermobacter thermautotrophicus (strain ATCC 29096 / DSM 1053 / JCM 10044 / NBRC 100330 / Delta H) (Methanobacterium thermoautotrophicum).